The sequence spans 268 residues: Ribosomal RNA small subunit methyltransferase A (268 aa).

Asn-18, Leu-20, Gly-45, Glu-66, Asp-91, and Asn-112 together coordinate S-adenosyl-L-methionine.

It belongs to the class I-like SAM-binding methyltransferase superfamily. rRNA adenine N(6)-methyltransferase family. RsmA subfamily.

It localises to the cytoplasm. The catalysed reaction is adenosine(1518)/adenosine(1519) in 16S rRNA + 4 S-adenosyl-L-methionine = N(6)-dimethyladenosine(1518)/N(6)-dimethyladenosine(1519) in 16S rRNA + 4 S-adenosyl-L-homocysteine + 4 H(+). Functionally, specifically dimethylates two adjacent adenosines (A1518 and A1519) in the loop of a conserved hairpin near the 3'-end of 16S rRNA in the 30S particle. May play a critical role in biogenesis of 30S subunits. This chain is Ribosomal RNA small subunit methyltransferase A, found in Shewanella baltica (strain OS223).